Consider the following 1320-residue polypeptide: Immunoglobulin superfamily member 1 (1320 aa).

The N-terminal stretch at 1 to 18 is a signal peptide; that stretch reads MMLRTFTLLLLCIWLNRG. Residues 19–504 lie on the Extracellular side of the membrane; sequence MTSMAAVESQ…LPWNSILNEA (486 aa). 5 Ig-like C2-type domains span residues 29–113, 115–212, 224–308, 312–399, and 401–482; these read PELW…KILE, EAPG…KLVV, HPGP…IWVT, PKTW…ATYN, and VELI…HRSE. N-linked (GlcNAc...) asparagine glycosylation occurs at asparagine 44. Residues cysteine 49 and cysteine 97 are joined by a disulfide bond. N-linked (GlcNAc...) asparagine glycans are attached at residues asparagine 329, asparagine 365, and asparagine 372. 2 disulfide bridges follow: cysteine 334–cysteine 383 and cysteine 423–cysteine 466. A helical transmembrane segment spans residues 505-525; the sequence is IRVSLTVQFLSLLLLVLWLQW. At 526-534 the chain is on the cytoplasmic side; sequence KCRRLRLRE. Residues 535–555 form a helical membrane-spanning segment; sequence AWLLGTAQGVAMLVILIALLC. Residues 556 to 1320 are Extracellular-facing; the sequence is CGLCNGALTE…GVSVEQTVPI (765 aa). 7 Ig-like C2-type domains span residues 572–665, 662–756, 761–853, 857–942, 949–1044, 1049–1134, and 1145–1226; these read PTPK…VGTD, VGTD…ELVI, PKPF…LIVT, PKPT…YLST, TDTF…ELIV, PKPS…NHSN, and PKPS…EPSD. N-linked (GlcNAc...) asparagine glycans are attached at residues asparagine 591, asparagine 731, asparagine 782, asparagine 830, asparagine 874, asparagine 923, asparagine 970, asparagine 1011, and asparagine 1066. An intrachain disulfide couples cysteine 783 to cysteine 833. A disulfide bridge links cysteine 879 with cysteine 926. A disulfide bond links cysteine 1071 and cysteine 1118. Residues asparagine 1131 and asparagine 1207 are each glycosylated (N-linked (GlcNAc...) asparagine). A disulfide bridge connects residues cysteine 1167 and cysteine 1210.

In terms of assembly, interacts with INHA; the interaction is not confirmed by standard receptor binding assays. Interacts with ACVR1B; the interaction appears to be ligand-dependent as it is diminished by inhibin B and activin A. Interacts with ACVR2A, ACVR2B, ACVRL1 and BMPR1B. Interacts with HECTD1. As to expression, expressed in pituitary gland, testis and liver. Isoform 2 is expressed pituitary gland and testis.

It is found in the membrane. The protein localises to the secreted. Its function is as follows. Seems to be a coreceptor in inhibin signaling, but seems not to be a high-affinity inhibin receptor. Antagonizes activin A signaling in the presence or absence of inhibin B. Necessary to mediate a specific antagonistic effect of inhibin B on activin-stimulated transcription. This Rattus norvegicus (Rat) protein is Immunoglobulin superfamily member 1 (Igsf1).